We begin with the raw amino-acid sequence, 1235 residues long: Insulin receptor substrate 1 (1235 aa).

Phosphoserine is present on S3. The interval 3 to 133 (SPPDTDGFSD…AGGGCGGSCS (131 aa)) is mediates interaction with PHIP. One can recognise a PH domain in the interval 12 to 115 (DVRKVGYLRK…WYQALLQLHN (104 aa)). At S99 the chain carries Phosphoserine; by CK2. Residues 155–259 (FKEVWQVILK…EAMRAMSDEF (105 aa)) enclose the IRS-type PTB domain. Residues 258-425 (EFRPRTKSQS…SDGGFISSDE (168 aa)) form a disordered region. Phosphoserine; by RPS6KB1 is present on residues S265 and S302. Residues 265–276 (SQSSSSCSNPIS) are compositionally biased toward low complexity. S307 is subject to Phosphoserine; by IKKB, MAPK8 and RPS6KB1. Phosphoserine is present on residues S318, S325, S340, and S343. Residues 349-358 (THAHRHRGSS) show a composition bias toward basic residues. 2 stretches are compositionally biased toward low complexity: residues 378–399 (SPSA…GSTS) and 407–419 (SSAS…SDGG). S414 carries the post-translational modification Phosphoserine. Phosphothreonine occurs at positions 441 and 448. The residue at position 460 (Y460) is a Phosphotyrosine; by INSR. The YXXM motif 1 motif lies at 460-463 (YICM). A Phosphothreonine; by CK2 modification is found at T502. The interval 520-539 (THSAGTSPTISHQKTPSQSS) is disordered. S522 is subject to Phosphoserine; by RPS6KB1. A compositionally biased stretch (polar residues) spans 522 to 539 (SAGTSPTISHQKTPSQSS). Short sequence motifs (YXXM motif) lie at residues 546–549 (YTEM) and 608–611 (YMPM). Y608 is subject to Phosphotyrosine; by INSR. A Phosphoserine modification is found at S612. Residue Y628 is modified to Phosphotyrosine; by INSR. Residues 628-631 (YMPM) carry the YXXM motif 4 motif. Position 632 is a phosphoserine; by RPS6KB1 and ROCK2 (S632). Phosphotyrosine is present on Y658. The short motif at 658 to 661 (YMMM) is the YXXM motif 5 element. The span at 669 to 689 (PDIGGGSCSSSSISAAPSGSS) shows a compositional bias: low complexity. The tract at residues 669–720 (PDIGGGSCSSSSISAAPSGSSYGKPWTNGVGGHHTHALPHAKPPVESGGGKL) is disordered. Positions 727–730 (YMNM) match the YXXM motif 6 motif. The interval 766–921 (FKHTQRPGEP…ATSRSSPSVR (156 aa)) is disordered. Positions 771-780 (RPGEPEEGAR) are enriched in basic and acidic residues. 3 stretches are compositionally biased toward low complexity: residues 785–794 (RLSSSSGRLR), 801–810 (DSSSSTSSDS), and 872–881 (QQQQQQQQQQ). S789 carries the post-translational modification Phosphoserine; by AMPK and SIK2. Residue S891 is modified to Phosphoserine. Y895, Y939, and Y987 each carry phosphotyrosine; by INSR. A GRB2-binding region spans residues 895–897 (YVN). 3 consecutive short sequence motifs (YXXM motif) follow at residues 939–942 (YMNM), 987–990 (YMTM), and 1010–1013 (YADM). A disordered region spans residues 1024 to 1165 (LPRTTGAAPP…SAPGCGAAGG (142 aa)). A compositionally biased stretch (low complexity) spans 1025–1046 (PRTTGAAPPPSSTASASASVTP). Residues 1072-1084 (TRVNLSPNHNQSA) show a composition bias toward polar residues. Position 1099 is a phosphoserine (S1099). S1100 carries the post-translational modification Phosphoserine; by RPS6KB1. Residues 1101–1114 (ETFSAPTRAANTVS) show a composition bias toward polar residues. Gly residues predominate over residues 1118–1128 (GAAGGGSGGGS). Residue Y1172 is modified to Phosphotyrosine; by INSR. Residues 1177 to 1235 (LVKDVKQHPQDCPSQQQSLPPPPPHQPLGSNEGSSPRRSSEDLSTYASINFQKQPEDRQ) form a disordered region. A Glycyl lysine isopeptide (Lys-Gly) (interchain with G-Cter in ubiquitin) cross-link involves residue K1179. The segment covering 1204 to 1229 (LGSNEGSSPRRSSEDLSTYASINFQK) has biased composition (polar residues). Y1222 carries the post-translational modification Phosphotyrosine; by INSR.

As to quaternary structure, interacts with SOCS7. Interacts (via IRS-type PTB domain) with IGF1R and INSR (via the tyrosine-phosphorylated NPXY motif). Interacts with UBTF, FER and PIK3CA. Interacts (via phosphorylated YXXM motifs) with PIK3R1. Interacts with ROCK1. Interacts (via PH domain) with PHIP. Interacts with GRB2. Interacts with ALK. Interacts with EIF2AK2/PKR. Interacts with GKAP1. Interacts with DGKZ in the absence of insulin; insulin stimulation decreases this interaction. Found in a ternary complex with DGKZ and PIP5K1A in the absence of insulin stimulation. Interacts with SQSTM1; the interaction is disrupted by the presence of tensin TNS2. Interacts with NCK1 (via SH2 domain). Interacts with NCK2 (via SH3 domain). Interacts with SH2B1; this interaction enhances leptin-induced activation of the PI3-kinase pathway. Interacts with DVL2; this interaction promotes the Wnt/beta-catenin signaling pathway. Interacts with JAK1. Serine phosphorylation of IRS1 is a mechanism for insulin resistance. Ser-307 phosphorylation inhibits insulin action through disruption of IRS1 interaction with the insulin receptor, and Ser-789 phosphorylation is increased in the liver of insulin-resistant rats. Phosphorylation of Tyr-895 is required for GRB2-binding. Phosphorylated by ALK. Phosphorylated at Ser-265, Ser-302, Ser-632 and Ser-1100 by RPS6KB1; phosphorylation induces accelerated degradation of IRS1. Phosphorylated on tyrosine residues in response to insulin. In skeletal muscles, dephosphorylated on Tyr-608 by TNS2 under anabolic conditions; dephosphorylation results in the proteasomal degradation of IRS1. Post-translationally, ubiquitinated by the Cul7-RING(FBXW8) complex in a mTOR-dependent manner, leading to its degradation: the Cul7-RING(FBXW8) complex recognizes and binds IRS1 previously phosphorylated by S6 kinase (RPS6KB1 or RPS6KB2). Ubiquitinated by TRAF4 through 'Lys-29' linkage; this ubiquitination regulates the interaction of IRS1 with IGFR and IRS1 tyrosine phosphorylation upon IGF1 stimulation. In terms of processing, S-nitrosylation at by BLVRB inhibits its activity.

It is found in the cytoplasm. The protein localises to the nucleus. In terms of biological role, signaling adapter protein that participates in the signal transduction from two prominent receptor tyrosine kinases, insulin receptor/INSR and insulin-like growth factor I receptor/IGF1R. Plays therefore an important role in development, growth, glucose homeostasis as well as lipid metabolism. Upon phosphorylation by the insulin receptor, functions as a signaling scaffold that propagates insulin action through binding to SH2 domain-containing proteins including the p85 regulatory subunit of PI3K, NCK1, NCK2, GRB2 or SHP2. Recruitment of GRB2 leads to the activation of the guanine nucleotide exchange factor SOS1 which in turn triggers the Ras/Raf/MEK/MAPK signaling cascade. Activation of the PI3K/AKT pathway is responsible for most of insulin metabolic effects in the cell, and the Ras/Raf/MEK/MAPK is involved in the regulation of gene expression and in cooperation with the PI3K pathway regulates cell growth and differentiation. Acts a positive regulator of the Wnt/beta-catenin signaling pathway through suppression of DVL2 autophagy-mediated degradation leading to cell proliferation. The polypeptide is Insulin receptor substrate 1 (Irs1) (Rattus norvegicus (Rat)).